A 314-amino-acid polypeptide reads, in one-letter code: Ribonuclease Z (314 aa).

Residues His62, His64, Asp66, His67, His139, Asp210, and His268 each contribute to the Zn(2+) site. The active-site Proton acceptor is Asp66.

This sequence belongs to the RNase Z family. As to quaternary structure, homodimer. Requires Zn(2+) as cofactor.

The catalysed reaction is Endonucleolytic cleavage of RNA, removing extra 3' nucleotides from tRNA precursor, generating 3' termini of tRNAs. A 3'-hydroxy group is left at the tRNA terminus and a 5'-phosphoryl group is left at the trailer molecule.. Functionally, zinc phosphodiesterase, which displays some tRNA 3'-processing endonuclease activity. Probably involved in tRNA maturation, by removing a 3'-trailer from precursor tRNA. The protein is Ribonuclease Z of Rippkaea orientalis (strain PCC 8801 / RF-1) (Cyanothece sp. (strain PCC 8801)).